The following is a 941-amino-acid chain: MKIKQIKQSLSLLLIITLIMSLFVPMASANTNESKSNAFPFSDVKKTSWSFPYIKDLYEQEVITGTSATTFSPTDSVTRAQFTVMLTRGLGLEASSKDYPFKDRKNWAYKEIQAAYEAGIVTGKTNGEFAPNENITREQMAAMAVRAYEYLENELSLPEEQREYNDSSSISTFAQDAVQKAYVLELMEGNTDGYFQPKRNSTREQSAKVISTLLWKVASHDYLYHTEAVKSPSEAGALQLVELNGQLTLAGEDGTPVQLRGMSTHGLQWFGEIVNENAFVALSNDWGSNMIRLAMYIGENGYATNPEVKDLVYEGIELAFEHDMYVIVDWHVHAPGDPRADVYSGAYDFFEEIADHYKDHPKNHYIIWELANEPSPNNNGGPGLTNDEKGWEAVKEYAEPIVEMLREKGDNMILVGNPNWSQRPDLSADNPIDAENIMYSVHFYTGSHGASHIGYPEGTPSSERSNVMANVRYALDNGVAVFATEWGTSQANGDGGPYFDEADVWLNFLNKHNISWANWSLTNKNEISGAFTPFELGRTDATDLDPGANQVWAPEELSLSGEYVRARIKGIEYTPIDRTKFTKLVWDFNDGTTQGFQVNGDSPNKESITLSNNNDALQIEGLNVSNDISEGNYWDNVRLSADGWSENVDILGATELTIDVIVEEPTTVSIAAIPQGPAAGWANPTRAIKVTEDDFESFGDGYKALVTITSEDSPSLETIATSPEDNTMSNIILFVGTEDADVISLDNITVSGTEIEIEVIHDEKGTATLPSTFEDGTRQGWDWHTESGVKTALTIEEANGSNALSWEYAYPEVKPSDGWATAPRLDFWKDELVRGTSDYISFDFYIDAVRASEGAISINAVFQPPANGYWQEVPTTFEIDLTELDSATVTSDELYHYEVKINIRDIEAITDDTELRNLLLIFADEDSDFAGRVFVDNVRFE.

Residues 1-29 form the signal peptide; that stretch reads MKIKQIKQSLSLLLIITLIMSLFVPMASA. SLH domains lie at 37–94, 95–158, and 161–224; these read NAFP…GLEA, SSKD…LSLP, and QREY…DYLY. Glu-373 acts as the Proton donor in catalysis. Glu-485 serves as the catalytic Nucleophile.

The protein belongs to the glycosyl hydrolase 5 (cellulase A) family.

The enzyme catalyses Endohydrolysis of (1-&gt;4)-beta-D-glucosidic linkages in cellulose, lichenin and cereal beta-D-glucans.. The polypeptide is Endoglucanase (Bacillus sp. (strain KSM-635)).